Reading from the N-terminus, the 107-residue chain is uncharacterized protein (107 aa).

3 helical membrane-spanning segments follow: residues 15–35 (TGSY…LGIS), 43–63 (LYRV…WLSY), and 87–107 (YFPS…IFCF).

The protein localises to the membrane. This is an uncharacterized protein from Saccharomyces cerevisiae (strain ATCC 204508 / S288c) (Baker's yeast).